We begin with the raw amino-acid sequence, 163 residues long: NADH-quinone oxidoreductase subunit I (163 aa).

2 4Fe-4S ferredoxin-type domains span residues 54–84 (LRRYPNGEERCIACKLCEAVCPALAISIESD) and 94–123 (TRYDIDLTKCIFCGFCEEACPVDAIVETHI). Residues Cys64, Cys67, Cys70, Cys74, Cys103, Cys106, Cys109, and Cys113 each contribute to the [4Fe-4S] cluster site.

The protein belongs to the complex I 23 kDa subunit family. NDH-1 is composed of 14 different subunits. Subunits NuoA, H, J, K, L, M, N constitute the membrane sector of the complex. The cofactor is [4Fe-4S] cluster.

It localises to the cell inner membrane. The catalysed reaction is a quinone + NADH + 5 H(+)(in) = a quinol + NAD(+) + 4 H(+)(out). In terms of biological role, NDH-1 shuttles electrons from NADH, via FMN and iron-sulfur (Fe-S) centers, to quinones in the respiratory chain. The immediate electron acceptor for the enzyme in this species is believed to be ubiquinone. Couples the redox reaction to proton translocation (for every two electrons transferred, four hydrogen ions are translocated across the cytoplasmic membrane), and thus conserves the redox energy in a proton gradient. The chain is NADH-quinone oxidoreductase subunit I from Cupriavidus metallidurans (strain ATCC 43123 / DSM 2839 / NBRC 102507 / CH34) (Ralstonia metallidurans).